Reading from the N-terminus, the 133-residue chain is Small ribosomal subunit protein uS11 (133 aa).

Belongs to the universal ribosomal protein uS11 family. In terms of assembly, part of the 30S ribosomal subunit.

In terms of biological role, located on the platform of the 30S subunit. This chain is Small ribosomal subunit protein uS11, found in Pyrobaculum aerophilum (strain ATCC 51768 / DSM 7523 / JCM 9630 / CIP 104966 / NBRC 100827 / IM2).